Reading from the N-terminus, the 163-residue chain is MTENNPLKKISLLNPIHLLAVGFGSGLIHPAPGTWGSLAGTILGVILLSLLGVKIFLIFTALCFLLGCYLCQKTTADMGVHDHGSIVWDEFVGVFIVLAAIPSLSWQWILAAFALFRFFDILKPFPIRYFDEKLENGFGIMIDDVLAAIYAVIVVFAIQYWML.

Transmembrane regions (helical) follow at residues 10-28 (ISLLNPIHLLAVGFGSGLI), 35-51 (WGSLAGTILGVILLSLL), 92-116 (VGVFIVLAAIPSLSWQWILAAFALF), and 137-157 (GFGIMIDDVLAAIYAVIVVFA).

Requires Mg(2+) as cofactor.

It is found in the cell inner membrane. It carries out the reaction a 1,2-diacyl-sn-glycero-3-phospho-(1'-sn-glycero-3'-phosphate) + H2O = a 1,2-diacyl-sn-glycero-3-phospho-(1'-sn-glycerol) + phosphate. Its pathway is phospholipid metabolism; phosphatidylglycerol biosynthesis; phosphatidylglycerol from CDP-diacylglycerol: step 2/2. Functionally, lipid phosphatase which dephosphorylates phosphatidylglycerophosphate (PGP) to phosphatidylglycerol (PG). In Haemophilus influenzae (strain ATCC 51907 / DSM 11121 / KW20 / Rd), this protein is Phosphatidylglycerophosphatase A (pgpA).